The sequence spans 721 residues: Fatty acid oxidation complex subunit alpha (721 aa).

Residues 1–190 (MIYEGKAITV…KVGAVDAVVA (190 aa)) form an enoyl-CoA hydratase/isomerase region. A substrate-binding site is contributed by D297. The segment at 312-721 (KDVKQAAVLG…SFFGQASSEE (410 aa)) is 3-hydroxyacyl-CoA dehydrogenase. NAD(+) contacts are provided by residues M325, D344, 401-403 (VVE), K408, and S430. Residue H451 is the For 3-hydroxyacyl-CoA dehydrogenase activity of the active site. N454 is an NAD(+) binding site. Substrate is bound by residues N501 and Y660.

The protein in the N-terminal section; belongs to the enoyl-CoA hydratase/isomerase family. It in the C-terminal section; belongs to the 3-hydroxyacyl-CoA dehydrogenase family. In terms of assembly, heterotetramer of two alpha chains (FadB) and two beta chains (FadA).

The catalysed reaction is a (3S)-3-hydroxyacyl-CoA + NAD(+) = a 3-oxoacyl-CoA + NADH + H(+). It carries out the reaction a (3S)-3-hydroxyacyl-CoA = a (2E)-enoyl-CoA + H2O. It catalyses the reaction a 4-saturated-(3S)-3-hydroxyacyl-CoA = a (3E)-enoyl-CoA + H2O. The enzyme catalyses (3S)-3-hydroxybutanoyl-CoA = (3R)-3-hydroxybutanoyl-CoA. The catalysed reaction is a (3Z)-enoyl-CoA = a 4-saturated (2E)-enoyl-CoA. It carries out the reaction a (3E)-enoyl-CoA = a 4-saturated (2E)-enoyl-CoA. It functions in the pathway lipid metabolism; fatty acid beta-oxidation. In terms of biological role, involved in the aerobic and anaerobic degradation of long-chain fatty acids via beta-oxidation cycle. Catalyzes the formation of 3-oxoacyl-CoA from enoyl-CoA via L-3-hydroxyacyl-CoA. It can also use D-3-hydroxyacyl-CoA and cis-3-enoyl-CoA as substrate. In Pseudomonas savastanoi pv. phaseolicola (strain 1448A / Race 6) (Pseudomonas syringae pv. phaseolicola (strain 1448A / Race 6)), this protein is Fatty acid oxidation complex subunit alpha.